Consider the following 321-residue polypeptide: uncharacterized protein (321 aa).

An ATP-binding site is contributed by G28–T35.

This sequence belongs to the archaeal ATPase family.

This is an uncharacterized protein from Pyrococcus horikoshii (strain ATCC 700860 / DSM 12428 / JCM 9974 / NBRC 100139 / OT-3).